We begin with the raw amino-acid sequence, 346 residues long: Melanoma-associated antigen B4 (346 aa).

Residues 1–18 (MPRGQKSKLRAREKRQRT) show a composition bias toward basic residues. Residues 1-107 (MPRGQKSKLR…STSTERSLKD (107 aa)) form a disordered region. Over residues 45 to 54 (VLRDTASSSL) the composition is skewed to polar residues. Residues 92-101 (ASSSQASTST) show a composition bias toward low complexity. An MAGE domain is found at 109–307 (LTRKTKMLVQ…NNFPLLYEEA (199 aa)). The segment at 311–346 (EEERAGARPRVAARRGTTAMTSAYSRATSSSSSQPM) is disordered. The segment covering 318–346 (RPRVAARRGTTAMTSAYSRATSSSSSQPM) has biased composition (low complexity).

As to expression, expressed in testis.

The protein resides in the cytoplasm. The chain is Melanoma-associated antigen B4 (MAGEB4) from Homo sapiens (Human).